Reading from the N-terminus, the 594-residue chain is 3-hydroxy-3-methylglutaryl coenzyme A reductase 2-A (594 aa).

Positions 1-32 (MDVRRRPVKSLSSAKTATAGEPPKSQQQHPKA) are disordered. The Lumenal portion of the chain corresponds to 1–37 (MDVRRRPVKSLSSAKTATAGEPPKSQQQHPKASDALP). A helical transmembrane segment spans residues 38 to 58 (LPLYLTNGLFFTMFFSVMYFL). Over 59-81 (LHRWREKIRNSTPLHVVTLSELA) the chain is Cytoplasmic. Residues 82–102 (ALVLLMASVIYLLGFFGIGFV) form a helical membrane-spanning segment. Over 103 to 549 (RSVIRPSPDA…SKESPGSNSR (447 aa)) the chain is Lumenal. The N-linked (GlcNAc...) asparagine glycan is linked to Asn-261. Glu-273 functions as the Charge relay system in the catalytic mechanism. N-linked (GlcNAc...) asparagine glycosylation is present at Asn-337. Residues Lys-405 and Asp-481 each act as charge relay system in the active site. A helical transmembrane segment spans residues 550–570 (LLASIVAGSVLAGELSLMSAL). At 571-594 (AAGQLVKSHMKYNRSSKDITKLSS) the chain is on the cytoplasmic side. Catalysis depends on His-579, which acts as the Proton donor.

The protein belongs to the HMG-CoA reductase family. Mostly expressed in the petioles of seedlings, seedlings and roots, and, to a lower extent, in seeds, leaves, stems and flowers.

The protein resides in the endoplasmic reticulum membrane. The protein localises to the plastid. Its subcellular location is the chloroplast membrane. It localises to the peroxisome membrane. The enzyme catalyses (R)-mevalonate + 2 NADP(+) + CoA = (3S)-3-hydroxy-3-methylglutaryl-CoA + 2 NADPH + 2 H(+). It participates in metabolic intermediate biosynthesis; (R)-mevalonate biosynthesis; (R)-mevalonate from acetyl-CoA: step 3/3. With respect to regulation, competitive inhibition by mevinolin (Mev) is leading to a significant reduction of total ginsenoside in adventitious roots. Triggered by darkness. Catalyzes the synthesis of mevalonate, the specific precursor of all isoprenoid compounds present in plants. Component of the triterpene saponins (e.g. ginsenosides or panaxosides) and phytosterols biosynthetic pathways. The polypeptide is 3-hydroxy-3-methylglutaryl coenzyme A reductase 2-A (Panax ginseng (Korean ginseng)).